The sequence spans 336 residues: Glycerol-3-phosphate dehydrogenase [NAD(P)+] (336 aa).

NADPH is bound by residues Ser-16, Tyr-17, His-37, and Lys-111. Residues Lys-111, Gly-140, and Thr-142 each coordinate sn-glycerol 3-phosphate. Residue Ala-144 participates in NADPH binding. Positions 196, 249, 259, 260, and 261 each coordinate sn-glycerol 3-phosphate. Lys-196 (proton acceptor) is an active-site residue. Position 260 (Arg-260) interacts with NADPH. Residues Val-284 and Glu-286 each contribute to the NADPH site.

Belongs to the NAD-dependent glycerol-3-phosphate dehydrogenase family.

The protein resides in the cytoplasm. It carries out the reaction sn-glycerol 3-phosphate + NAD(+) = dihydroxyacetone phosphate + NADH + H(+). It catalyses the reaction sn-glycerol 3-phosphate + NADP(+) = dihydroxyacetone phosphate + NADPH + H(+). It functions in the pathway membrane lipid metabolism; glycerophospholipid metabolism. Functionally, catalyzes the reduction of the glycolytic intermediate dihydroxyacetone phosphate (DHAP) to sn-glycerol 3-phosphate (G3P), the key precursor for phospholipid synthesis. The chain is Glycerol-3-phosphate dehydrogenase [NAD(P)+] from Haemophilus ducreyi (strain 35000HP / ATCC 700724).